A 416-amino-acid polypeptide reads, in one-letter code: Transmembrane protease serine 11B-like protein (416 aa).

At 1–15 the chain is on the cytoplasmic side; sequence MYRPVIASRKSIPPW. The chain crosses the membrane as a helical; Signal-anchor for type II membrane protein span at residues 16–36; that stretch reads LIILCVLGVLAALGIIIGLLV. Topologically, residues 37–416 are extracellular; that stretch reads HFLAVENKIY…RNWIASKTGI (380 aa). Residues 44–161 form the SEA domain; the sequence is KIYYYQGGFK…GSLKLTEISK (118 aa). An N-linked (GlcNAc...) asparagine glycan is attached at Asn-107. In terms of domain architecture, Peptidase S1 spans 185–415; it reads ITGGSTAHKG…YRNWIASKTG (231 aa). Cys-210 and Cys-226 are disulfide-bonded. The active-site Charge relay system is His-225. Asn-235 carries an N-linked (GlcNAc...) asparagine glycan. Asp-270 functions as the Charge relay system in the catalytic mechanism. Intrachain disulfides connect Cys-335/Cys-351 and Cys-362/Cys-391. Ser-366 serves as the catalytic Charge relay system.

Belongs to the peptidase S1 family. In terms of tissue distribution, expressed in esophagus, cervix, tongue, and testes.

It is found in the cell membrane. Its activity is regulated as follows. Inhibited by aprotinin, leupeptin, benzamidine, SERPINA1, SPINT1 and SPINT2. In terms of biological role, serine protease. The sequence is that of Transmembrane protease serine 11B-like protein (Tmprss11b) from Mus musculus (Mouse).